Here is a 287-residue protein sequence, read N- to C-terminus: Stomatin-like protein 3 (287 aa).

A Phosphoserine modification is found at S3. Residues W25–M45 form a helical; Signal-anchor for type III membrane protein membrane-spanning segment. Over C46–A287 the chain is Cytoplasmic. Position 237 is a phosphoserine (S237).

Belongs to the band 7/mec-2 family. Homodimer. Interacts with PIEZO1 and PIEZO2. As to expression, expressed by all dorsal root ganglion neurons and is selectively expressed in neuronal tissues. Detected in olfactory epithelium.

The protein localises to the cell membrane. Functionally, required for the function of many mechanoreceptors. Modulate mechanotransduction channels and acid-sensing ion channels (ASIC) proteins. Potentiates PIEZO1 and PIEZO2 function by increasing their sensitivity to mechanical stimulations. This is Stomatin-like protein 3 (Stoml3) from Mus musculus (Mouse).